Here is a 106-residue protein sequence, read N- to C-terminus: Nucleoid-associated protein Nwi_0368 (106 aa).

The protein belongs to the YbaB/EbfC family. In terms of assembly, homodimer.

Its subcellular location is the cytoplasm. The protein resides in the nucleoid. Its function is as follows. Binds to DNA and alters its conformation. May be involved in regulation of gene expression, nucleoid organization and DNA protection. This Nitrobacter winogradskyi (strain ATCC 25391 / DSM 10237 / CIP 104748 / NCIMB 11846 / Nb-255) protein is Nucleoid-associated protein Nwi_0368.